The sequence spans 282 residues: Elongation factor Ts (282 aa).

Residues 80 to 83 (TDFV) are involved in Mg(2+) ion dislocation from EF-Tu.

This sequence belongs to the EF-Ts family.

The protein localises to the cytoplasm. In terms of biological role, associates with the EF-Tu.GDP complex and induces the exchange of GDP to GTP. It remains bound to the aminoacyl-tRNA.EF-Tu.GTP complex up to the GTP hydrolysis stage on the ribosome. This chain is Elongation factor Ts (tsf), found in Chlamydia muridarum (strain MoPn / Nigg).